Reading from the N-terminus, the 801-residue chain is MSLLHIAVILPLIFALIIPILYRFFKRIHLGWFVLPVPIVIFIYMLTLIKTTMSGNTVMKTLNWMPHFGMNFDLYLDGLGLLFSLLISGIGSLVVLYSIGYLSKSEQLGNFYCYLLLFMGAMLGVVLSDNVIILYLFWELTSFSSFLLISFWRERQASIYGAQKSLIITVFGGLSLLGGIILLAIPTQSFSIQYMIQHASEIQNSPFFIFAMILIMIGAFTKSAQFPFYIWLPDAMEAPTPVSAYLHSATMVKAGLYLIARMTPIFAASQGWVWTVTLVGLITLFWASLNATKQQDLKGILAFSTVSQLGMIMAMLGIGAISYHYQGDDSKIYAAAFTAAIFHLINHATFKGALFMITGAVDHSTGTRDVKKLGGLLTIMPISFTITVITALSMAGVPPFNGFLSKESFLETTFTASQANLFSVDTLGYLFPIIGIVGSVFTFVYSIKFIMHIFFGQYKPEQLPKKAHEVSILMLLSPAILATLVIVFGLFPGILTNSIIEPATSSINHTVIDDVEFHMFHGLTPAFLSTLVIYILGILLIVTFSYWVKLLQRQPGKLTFNYWYNRSANVIPNYSEKMTNSYVTDYSRNNLVIIFGALILLTFVTIFSVPFNINFKDVSPIRIFEVCIVILLLSAAFLILFAKSRLFSIIMLSAVGYAVSVLFIFFKAPDLALTQFVVESISTALFLLCFYHLPNLNRYNEKRSFQLTNALIAGGVGLSVIIIGLIAYGNRHFESISKFYQEHVYDLAHGKNMVNVILVDFRGMDTLFESSVLGIAGLAVYTMIKLRKKRQTQGNEVKNHE.

The next 21 membrane-spanning stretches (helical) occupy residues 4–25 (LHIA…YRFF), 30–49 (LGWF…LTLI), 79–101 (LGLL…SIGY), 108–127 (LGNF…GVVL), 131–153 (VIIL…SFWR), 166–188 (LIIT…IPTQ), 208–230 (FIFA…PFYI), 243–265 (SAYL…MTPI), 270–289 (QGWV…WASL), 302–324 (AFST…ISYH), 339–361 (AAIF…TGAV), 373–395 (LGGL…LSMA), 429–451 (YLFP…KFIM), 472–494 (ILML…FPGI), 526–548 (AFLS…SYWV), 589–611 (NNLV…SVPF), 621–641 (IRIF…LILF), 646–668 (LFSI…FFKA), 672–694 (ALTQ…YHLP), 707–729 (LTNA…IAYG), and 767–784 (LFES…YTMI).

The protein belongs to the CPA3 antiporters (TC 2.A.63) subunit A family. In terms of assembly, may form a heterooligomeric complex that consists of seven subunits: mnhA1, mnhB1, mnhC1, mnhD1, mnhE1, mnhF1 and mnhG1.

The protein resides in the cell membrane. Na(+) extrusion is completely inhibited by the H(+) conductor carbonyl cyanide m-chlorophenylhydrazone (CCCP). Functionally, mnh complex is a Na(+)/H(+) antiporter involved in Na(+) excretion. This is Na(+)/H(+) antiporter subunit A1 (mnhA1) from Staphylococcus aureus (strain MSSA476).